Reading from the N-terminus, the 156-residue chain is Small ribosomal subunit protein uS7 (156 aa).

It belongs to the universal ribosomal protein uS7 family. Part of the 30S ribosomal subunit. Contacts proteins S9 and S11.

Its function is as follows. One of the primary rRNA binding proteins, it binds directly to 16S rRNA where it nucleates assembly of the head domain of the 30S subunit. Is located at the subunit interface close to the decoding center, probably blocks exit of the E-site tRNA. This chain is Small ribosomal subunit protein uS7, found in Pseudomonas fluorescens (strain ATCC BAA-477 / NRRL B-23932 / Pf-5).